The primary structure comprises 105 residues: Malonate decarboxylase acyl carrier protein (105 aa).

Ser-28 is subject to O-(phosphoribosyl dephospho-coenzyme A)serine.

Belongs to the MdcC family. Covalently binds the prosthetic group of malonate decarboxylase.

It localises to the cytoplasm. In terms of biological role, subunit of malonate decarboxylase, it is an acyl carrier protein to which acetyl and malonyl thioester residues are bound via a 2'-(5''-phosphoribosyl)-3'-dephospho-CoA prosthetic group and turn over during the catalytic mechanism. This Bradyrhizobium diazoefficiens (strain JCM 10833 / BCRC 13528 / IAM 13628 / NBRC 14792 / USDA 110) protein is Malonate decarboxylase acyl carrier protein.